Here is a 331-residue protein sequence, read N- to C-terminus: 6-phosphogluconolactonase (331 aa).

This sequence belongs to the cycloisomerase 2 family.

It carries out the reaction 6-phospho-D-glucono-1,5-lactone + H2O = 6-phospho-D-gluconate + H(+). The protein operates within carbohydrate degradation; pentose phosphate pathway; D-ribulose 5-phosphate from D-glucose 6-phosphate (oxidative stage): step 2/3. Catalyzes the hydrolysis of 6-phosphogluconolactone to 6-phosphogluconate. This Salmonella agona (strain SL483) protein is 6-phosphogluconolactonase.